The chain runs to 240 residues: uncharacterized protein (240 aa).

The first 30 residues, 1–30 (MNKSGMSLIITMLLLIGTAIVIGAAYYAWS), serve as a signal peptide directing secretion.

This is an uncharacterized protein from Methanocaldococcus jannaschii (strain ATCC 43067 / DSM 2661 / JAL-1 / JCM 10045 / NBRC 100440) (Methanococcus jannaschii).